Reading from the N-terminus, the 44-residue chain is F420-non-reducing hydrogenase vhu subunit U (44 aa).

Sec-20 and Cys-23 together coordinate Ni(2+). A non-standard amino acid (selenocysteine) is located at residue Sec-20. Residues Met-27–Glu-44 constitute a propeptide, removed in mature form.

This sequence belongs to the [NiFe]/[NiFeSe] hydrogenase large subunit family. The F420-non-reducing hydrogenase vhu is composed of four subunits; VhuA, VhuD, VhuG and VhuU. Ni(2+) serves as cofactor.

The protein is F420-non-reducing hydrogenase vhu subunit U (vhuU) of Methanococcus voltae.